Reading from the N-terminus, the 176-residue chain is MNNCTPNIKSSYGYEDLLASGRGELFGKEGPQLPAPTMLMMDRVNLMTENGGLFDKGYIEAELDIHPDLPFFGCHFIGDPVMPGCLGLDAMWQLVGFFLGWIGGKGKGRALGVGEVKFTGQILPTAKKVTYRIHMKRVINRKLVMGLADGEVEVDGRVIYTATDLKVGLFQDTSSF.

The active site involves His-75.

It belongs to the thioester dehydratase family. FabA subfamily. Homodimer.

The protein localises to the cytoplasm. The catalysed reaction is a (3R)-hydroxyacyl-[ACP] = a (2E)-enoyl-[ACP] + H2O. It carries out the reaction (3R)-hydroxydecanoyl-[ACP] = (2E)-decenoyl-[ACP] + H2O. It catalyses the reaction (2E)-decenoyl-[ACP] = (3Z)-decenoyl-[ACP]. It participates in lipid metabolism; fatty acid biosynthesis. In terms of biological role, necessary for the introduction of cis unsaturation into fatty acids. Catalyzes the dehydration of (3R)-3-hydroxydecanoyl-ACP to E-(2)-decenoyl-ACP and then its isomerization to Z-(3)-decenoyl-ACP. Can catalyze the dehydratase reaction for beta-hydroxyacyl-ACPs with saturated chain lengths up to 16:0, being most active on intermediate chain length. The sequence is that of 3-hydroxydecanoyl-[acyl-carrier-protein] dehydratase from Haemophilus ducreyi (strain 35000HP / ATCC 700724).